The primary structure comprises 380 residues: Probable dual-specificity RNA methyltransferase RlmN (380 aa).

E123 serves as the catalytic Proton acceptor. Residues 129–362 (HEYGNSVCVT…VTIRREQGSD (234 aa)) enclose the Radical SAM core domain. C136 and C367 are oxidised to a cystine. [4Fe-4S] cluster is bound by residues C143, C147, and C150. S-adenosyl-L-methionine is bound by residues 193 to 194 (GE), S225, 248 to 250 (SLH), and N324. C367 (S-methylcysteine intermediate) is an active-site residue.

It belongs to the radical SAM superfamily. RlmN family. The cofactor is [4Fe-4S] cluster.

The protein localises to the cytoplasm. The enzyme catalyses adenosine(2503) in 23S rRNA + 2 reduced [2Fe-2S]-[ferredoxin] + 2 S-adenosyl-L-methionine = 2-methyladenosine(2503) in 23S rRNA + 5'-deoxyadenosine + L-methionine + 2 oxidized [2Fe-2S]-[ferredoxin] + S-adenosyl-L-homocysteine. The catalysed reaction is adenosine(37) in tRNA + 2 reduced [2Fe-2S]-[ferredoxin] + 2 S-adenosyl-L-methionine = 2-methyladenosine(37) in tRNA + 5'-deoxyadenosine + L-methionine + 2 oxidized [2Fe-2S]-[ferredoxin] + S-adenosyl-L-homocysteine. Functionally, specifically methylates position 2 of adenine 2503 in 23S rRNA and position 2 of adenine 37 in tRNAs. The polypeptide is Probable dual-specificity RNA methyltransferase RlmN (Lysinibacillus sphaericus (strain C3-41)).